The sequence spans 205 residues: N-(5'-phosphoribosyl)anthranilate isomerase (205 aa).

This sequence belongs to the TrpF family.

The catalysed reaction is N-(5-phospho-beta-D-ribosyl)anthranilate = 1-(2-carboxyphenylamino)-1-deoxy-D-ribulose 5-phosphate. Its pathway is amino-acid biosynthesis; L-tryptophan biosynthesis; L-tryptophan from chorismate: step 3/5. This is N-(5'-phosphoribosyl)anthranilate isomerase from Acidiphilium cryptum (strain JF-5).